Consider the following 471-residue polypeptide: 3-isopropylmalate dehydratase large subunit (471 aa).

Positions 347, 407, and 410 each coordinate [4Fe-4S] cluster.

It belongs to the aconitase/IPM isomerase family. LeuC type 1 subfamily. As to quaternary structure, heterodimer of LeuC and LeuD. [4Fe-4S] cluster serves as cofactor.

It carries out the reaction (2R,3S)-3-isopropylmalate = (2S)-2-isopropylmalate. Its pathway is amino-acid biosynthesis; L-leucine biosynthesis; L-leucine from 3-methyl-2-oxobutanoate: step 2/4. Catalyzes the isomerization between 2-isopropylmalate and 3-isopropylmalate, via the formation of 2-isopropylmaleate. The chain is 3-isopropylmalate dehydratase large subunit from Vibrio parahaemolyticus serotype O3:K6 (strain RIMD 2210633).